Here is a 485-residue protein sequence, read N- to C-terminus: Adenosylhomocysteinase 1 (485 aa).

Positions 64, 139, and 205 each coordinate substrate. Position 206 to 208 (206 to 208 (TTT)) interacts with NAD(+). The substrate site is built by Lys-235 and Asp-239. NAD(+)-binding positions include 271-276 (GDVGKG), Glu-292, 348-350 (IGH), Asn-397, His-404, Lys-479, 479-483 (KPPHY), and Tyr-483.

This sequence belongs to the adenosylhomocysteinase family. In terms of assembly, homotetramer. NAD(+) is required as a cofactor.

The enzyme catalyses S-adenosyl-L-homocysteine + H2O = L-homocysteine + adenosine. It participates in amino-acid biosynthesis; L-homocysteine biosynthesis; L-homocysteine from S-adenosyl-L-homocysteine: step 1/1. Its function is as follows. Essential protein during embryogenesis. Adenosylhomocysteine is a competitive inhibitor of S-adenosyl-L-methionine-dependent methyl transferase reactions; therefore adenosylhomocysteinase may play a key role in the control of methylations via regulation of the intracellular concentration of adenosylhomocysteine. Required for DNA methylation-dependent gene silencing. The chain is Adenosylhomocysteinase 1 from Arabidopsis thaliana (Mouse-ear cress).